A 536-amino-acid chain; its full sequence is Phosphoenolpyruvate carboxykinase (ATP) (536 aa).

Substrate is bound by residues Arg-61, Tyr-195, and Lys-201. ATP contacts are provided by residues Lys-201, His-220, and 236–244 (GLSGTGKTT). Mn(2+)-binding residues include Lys-201 and His-220. Position 257 (Asp-257) interacts with Mn(2+). ATP is bound by residues Glu-285, Arg-322, and Thr-447. Arg-322 lines the substrate pocket.

It belongs to the phosphoenolpyruvate carboxykinase (ATP) family. Requires Mn(2+) as cofactor.

The protein localises to the cytoplasm. The catalysed reaction is oxaloacetate + ATP = phosphoenolpyruvate + ADP + CO2. It functions in the pathway carbohydrate biosynthesis; gluconeogenesis. Involved in the gluconeogenesis. Catalyzes the conversion of oxaloacetate (OAA) to phosphoenolpyruvate (PEP) through direct phosphoryl transfer between the nucleoside triphosphate and OAA. The sequence is that of Phosphoenolpyruvate carboxykinase (ATP) from Rhizobium etli (strain CIAT 652).